Reading from the N-terminus, the 156-residue chain is Protein S100-A9 (156 aa).

2 consecutive EF-hand domains span residues 16–51 (INIFHQYSVRLGHYDTLIQKEFKQLVQKELPNFLKK) and 54–89 (KNEAAINEIMEDLDTNVDKQLSFEEFIMLVARLTVA). His20 contacts Zn(2+). Residues Ser23, Leu26, and His28 each contribute to the Ca(2+) site. Position 30 (Asp30) interacts with Zn(2+). Positions 31, 36, 67, 69, 71, 73, and 78 each coordinate Ca(2+). Zn(2+) is bound by residues His91 and His95. The segment at 94 to 156 (MHNTAPPGQG…HSHGGHGHSH (63 aa)) is disordered. Position 106 is a pros-methylhistidine (His106). Gly residues predominate over residues 108 to 119 (PGYGKGGSGSCS). Residues 135–156 (GHGHGHSHGGHGHSHGGHGHSH) are compositionally biased toward basic residues.

The protein belongs to the S-100 family. As to quaternary structure, homodimer. Preferentially exists as a heterodimer or heterotetramer with S100A8 known as calprotectin (S100A8/A9). S100A9 interacts with ATP2A2. S100A9 interacts with AGER, and with the heterodimeric complex formed by TLR4 and LY96 in the presence of calcium and/or zinc ions. S100A9 binds quinoline-3-carboxamides in the presence of calcium and/or zinc ions. S100A9 interacts with amyloid-beta protein 40. Calprotectin (S100A8/9) interacts with CEACAM3 and tubulin filaments in a calcium-dependent manner. Heterotetrameric calprotectin (S100A8/A9) interacts with ANXA6 and associates with tubulin filaments in activated monocytes. Calprotectin (S100A8/9) interacts with NCF2/P67PHOX, RAC1, RAC2, CYBA and CYBB. Calprotectin (S100A8/9) interacts with NOS2 to form the iNOS-S100A8/A9 transnitrosylase complex; induced by LDL(ox). Calprotectin (S100A8/9) interacts with CD69. Post-translationally, phosphorylated. Phosphorylation inhibits activation of tubulin polymerization. Methylation at His-106 by METTL9 reduces zinc-binding without affecting heterodimerization with S100A8. In terms of tissue distribution, found essentially in phagocytic cells.

Its subcellular location is the secreted. The protein resides in the cytoplasm. It is found in the cytoskeleton. The protein localises to the cell membrane. S100A9 is a calcium- and zinc-binding protein which plays a prominent role in the regulation of inflammatory processes and immune response. It can induce neutrophil chemotaxis, adhesion, can increase the bactericidal activity of neutrophils by promoting phagocytosis via activation of SYK, PI3K/AKT, and ERK1/2 and can induce degranulation of neutrophils by a MAPK-dependent mechanism. Predominantly found as calprotectin (S100A8/A9) which has a wide plethora of intra- and extracellular functions. The intracellular functions include: facilitating leukocyte arachidonic acid trafficking and metabolism, modulation of the tubulin-dependent cytoskeleton during migration of phagocytes and activation of the neutrophilic NADPH-oxidase. Also participates in regulatory T-cell differentiation together with CD69. Activates NADPH-oxidase by facilitating the enzyme complex assembly at the cell membrane, transferring arachidonic acid, an essential cofactor, to the enzyme complex and S100A8 contributes to the enzyme assembly by directly binding to NCF2/P67PHOX. The extracellular functions involve pro-inflammatory, antimicrobial, oxidant-scavenging and apoptosis-inducing activities. Its pro-inflammatory activity includes recruitment of leukocytes, promotion of cytokine and chemokine production, and regulation of leukocyte adhesion and migration. Acts as an alarmin or a danger associated molecular pattern (DAMP) molecule and stimulates innate immune cells via binding to pattern recognition receptors such as Toll-like receptor 4 (TLR4) and receptor for advanced glycation endproducts (AGER). Binding to TLR4 and AGER activates the MAP-kinase and NF-kappa-B signaling pathways resulting in the amplification of the pro-inflammatory cascade. Has antimicrobial activity towards bacteria and fungi and exerts its antimicrobial activity probably via chelation of Zn(2+) which is essential for microbial growth. Can induce cell death via autophagy and apoptosis and this occurs through the cross-talk of mitochondria and lysosomes via reactive oxygen species (ROS) and the process involves BNIP3. Can regulate neutrophil number and apoptosis by an anti-apoptotic effect; regulates cell survival via ITGAM/ITGB and TLR4 and a signaling mechanism involving MEK-ERK. Its role as an oxidant scavenger has a protective role in preventing exaggerated tissue damage by scavenging oxidants. The iNOS-S100A8/A9 transnitrosylase complex is proposed to direct selective inflammatory stimulus-dependent S-nitrosylation of multiple targets such as GAPDH, NXA5, EZR, MSN and VIM by recognizing a [IL]-x-C-x-x-[DE] motif. This chain is Protein S100-A9 (S100A9), found in Bos taurus (Bovine).